A 634-amino-acid polypeptide reads, in one-letter code: Probable potassium transport system protein Kup 1 (634 aa).

12 consecutive transmembrane segments (helical) span residues 20-40 (FLTLSLGSIGVVYGDIGTSPL), 64-84 (VMSLMLWTLVIIVTLKYVLLI), 110-130 (FAAISLLGMAGAALFYGDAII), 148-168 (PVFDPYILPLSMAILIGLFVV), 176-196 (VAAWFGPIMLLWFTVMALGGI), 224-244 (AGLLALGAVFLTVTGAEALYA), 256-276 (FAWFAVVFPALALCYLGQGAM), 290-310 (FLFPEWALLPMVGLATAATII), 348-368 (IYIPRANWLLLIAVLYLVFAF), 377-397 (AYGIAVTGTMVITSVMAYFVM), 405-425 (VATSALIIAPFLTVDLIFLMA), and 430-450 (IFEGGWIPLVIGGGLMGVMIT).

Belongs to the HAK/KUP transporter (TC 2.A.72) family.

It localises to the cell inner membrane. The catalysed reaction is K(+)(in) + H(+)(in) = K(+)(out) + H(+)(out). Transport of potassium into the cell. Likely operates as a K(+):H(+) symporter. In Rhodopseudomonas palustris (strain BisB5), this protein is Probable potassium transport system protein Kup 1.